We begin with the raw amino-acid sequence, 20 residues long: Lysozyme (20 aa).

Monomer.

Its subcellular location is the secreted. It catalyses the reaction Hydrolysis of (1-&gt;4)-beta-linkages between N-acetylmuramic acid and N-acetyl-D-glucosamine residues in a peptidoglycan and between N-acetyl-D-glucosamine residues in chitodextrins.. Has bacteriolytic activity. In Lysobacter sp. (strain XL1), this protein is Lysozyme.